Here is a 451-residue protein sequence, read N- to C-terminus: 2-succinylbenzoate--CoA ligase (451 aa).

The protein belongs to the ATP-dependent AMP-binding enzyme family. MenE subfamily.

The enzyme catalyses 2-succinylbenzoate + ATP + CoA = 2-succinylbenzoyl-CoA + AMP + diphosphate. It participates in quinol/quinone metabolism; 1,4-dihydroxy-2-naphthoate biosynthesis; 1,4-dihydroxy-2-naphthoate from chorismate: step 5/7. The protein operates within quinol/quinone metabolism; menaquinone biosynthesis. Its function is as follows. Converts 2-succinylbenzoate (OSB) to 2-succinylbenzoyl-CoA (OSB-CoA). The protein is 2-succinylbenzoate--CoA ligase of Escherichia coli (strain K12).